Here is a 36-residue protein sequence, read N- to C-terminus: Mu/omega-theraphotoxin-Pmu1a (36 aa).

Disulfide bonds link Cys2/Cys16, Cys9/Cys21, and Cys15/Cys29.

It belongs to the neurotoxin 10 (Hwtx-1) family. Expressed by the venom gland.

Its subcellular location is the secreted. Its function is as follows. Gating-modifier toxin that targets both voltage-gated sodium and calcium channels, with described activities on human Nav1.7/SCN9A (IC(50)=5.5-7 nM), hNav1.6/SCN10A (IC(50)=9.9 nM), hNav1.4/SCN4A (IC(50)=62.9 nM), hCav3.2/CACNA1H (IC(50)=955.4 nM or 63.5% inhibition at 10 uM), hCav3.1/CACNA1G (95.1% inhibition at 10 uM), hCav3.3/CACNA1I (90.8% inhibition at 10 uM). Acts on Cav3 currents mainly by inducing a strong depolarizing shift in the current-voltage curve. This Pterinochilus murinus (Mombasa golden starburst baboon spider) protein is Mu/omega-theraphotoxin-Pmu1a.